We begin with the raw amino-acid sequence, 812 residues long: MKFTLSWLKDHLDTDEPLEKLADKLTMIGLEVEHIADKSKTFAPFTIARVVSAVQHPNADRLRVCMVDTGETSDKGDPSYIQVVCGAPNAREGLISVFAPPGTHIPGKNITLGVGTIRGVESRGMLCSAAELEISDDHDGIIELPADAPVGAGYAEWAGLGDPVIEINLTPNRQDCTGVHGIARDLSAADMGRFKDPTIKPVTGEFPCPVKVTVEDASLCPGFALRMVRGVKNGPSPEWLQKRLTSIGLRPINALVDITNFMTYDRARPLHVFDAKKVHGDLTIRRARDGETLKALDGRIYTLDPNVCVIADDKGVESLAGIMGGEETGCDETTTDVLIESALWSEINIAQTGRRLGINSDARYRFERGVDPAFMVPGLEMATRLVMELCGGSPSENVVAGQALPEDRVIDFPLSEIKRLAAIDVPLVEVRRILGHLGFMVAGSGPVVKVAIPTWRTDVQGKADLVEEIVRIVGVDKVPMTPFDRGEAPRKPVLTSIQSRTRKARRALAARGMVEAVNWSFISRTQAELFGGGSSELALANPIASDLSDMRPSLLPGLVAIAQANADRGFADVALFEVGQIFRGDGPQDQFMAAAGLRRGIASSAGLGRHWSGSATANALDAKADAFAVLAAAGAPAAALQIATSHESKNFPAWLHPGRSAAIQIGPHNVLGYFGELHPRVLDELKAEGPLLGFEVILDRIPEAKQKPTRAKPVLELPAFQPVSRDFAFIVDRTVKAADIVRAAQNVDRKLVSGVTVFDIYEGKGIDADKKSVAIAVRLQPRDRTFTDQEIEAVAGKIVAEVAKRTGGSLRG.

The tRNA-binding domain maps to 39-155; that stretch reads SKTFAPFTIA…ADAPVGAGYA (117 aa). The region spanning 405–480 is the B5 domain; it reads PEDRVIDFPL…RIVGVDKVPM (76 aa). Positions 458, 464, 467, and 468 each coordinate Mg(2+). The FDX-ACB domain maps to 718-811; that stretch reads PAFQPVSRDF…VAKRTGGSLR (94 aa).

It belongs to the phenylalanyl-tRNA synthetase beta subunit family. Type 1 subfamily. As to quaternary structure, tetramer of two alpha and two beta subunits. Mg(2+) is required as a cofactor.

Its subcellular location is the cytoplasm. The catalysed reaction is tRNA(Phe) + L-phenylalanine + ATP = L-phenylalanyl-tRNA(Phe) + AMP + diphosphate + H(+). This chain is Phenylalanine--tRNA ligase beta subunit, found in Nitrobacter winogradskyi (strain ATCC 25391 / DSM 10237 / CIP 104748 / NCIMB 11846 / Nb-255).